Reading from the N-terminus, the 101-residue chain is Large ribosomal subunit protein uL23 (101 aa).

It belongs to the universal ribosomal protein uL23 family. As to quaternary structure, part of the 50S ribosomal subunit. Contacts protein L29, and trigger factor when it is bound to the ribosome.

Its function is as follows. One of the early assembly proteins it binds 23S rRNA. One of the proteins that surrounds the polypeptide exit tunnel on the outside of the ribosome. Forms the main docking site for trigger factor binding to the ribosome. This is Large ribosomal subunit protein uL23 from Micrococcus luteus (strain ATCC 4698 / DSM 20030 / JCM 1464 / CCM 169 / CCUG 5858 / IAM 1056 / NBRC 3333 / NCIMB 9278 / NCTC 2665 / VKM Ac-2230) (Micrococcus lysodeikticus).